The following is a 523-amino-acid chain: Glycerate kinase (523 aa).

Ser-60 bears the Phosphoserine mark. N6-acetyllysine is present on Lys-200.

It belongs to the glycerate kinase type-2 family.

The protein resides in the cytoplasm. The enzyme catalyses (R)-glycerate + ATP = (2R)-3-phosphoglycerate + ADP + H(+). The polypeptide is Glycerate kinase (GLYCTK) (Bos taurus (Bovine)).